The following is a 151-amino-acid chain: Ubiquitin-conjugating enzyme E2-17 kDa (151 aa).

The region spanning 4 to 150 (PARRRLMRDF…VKACVEQSFI (147 aa)) is the UBC core domain. Cys-88 functions as the Glycyl thioester intermediate in the catalytic mechanism.

It belongs to the ubiquitin-conjugating enzyme family.

The protein resides in the nucleus. The enzyme catalyses S-ubiquitinyl-[E1 ubiquitin-activating enzyme]-L-cysteine + [E2 ubiquitin-conjugating enzyme]-L-cysteine = [E1 ubiquitin-activating enzyme]-L-cysteine + S-ubiquitinyl-[E2 ubiquitin-conjugating enzyme]-L-cysteine.. It participates in protein modification; protein ubiquitination. E2 ubiquitin-conjugating enzyme that accepts ubiquitin from the ubiquitin-activating enzyme E1 and transfers it to a E3 ubiquitin-protein ligase. Required for postreplication repair of UV-damaged DNA. Involved in the negative regulation of the Ras/MAPK signaling pathway in the wing by acting with the putative E3 ligases poe, Kcmf1 and Ufd4 to mediate the ubiquitination and proteasomal degradation of rl/MAPK. Required for in mitophagy. This chain is Ubiquitin-conjugating enzyme E2-17 kDa, found in Drosophila melanogaster (Fruit fly).